The primary structure comprises 378 residues: Zinc finger protein DPF3 (378 aa).

Residue Lys99 forms a Glycyl lysine isopeptide (Lys-Gly) (interchain with G-Cter in SUMO2) linkage. Residues 146–193 (LENDENVEEGNEEEDLEEDVPKRKNRTRGRARGSAGGRRRHDAASQED) form a disordered region. Residues 148–163 (NDENVEEGNEEEDLEE) show a composition bias toward acidic residues. Residues 168 to 186 (RKNRTRGRARGSAGGRRRH) show a composition bias toward basic residues. A C2H2-type zinc finger spans residues 198 to 221 (YVCDICGKRYKNRPGLSYHYAHTH). The tract at residues 225–254 (EEGDEAQDQETRSPPNHRNENHRPQKGPDG) is disordered. 2 consecutive PHD-type zinc fingers follow at residues 259–319 (NNYC…CKSC) and 316–366 (CKSC…CWEL). Positions 317-332 (KSCILCGTSENDDQLL) are interaction with HDGFL2. A Phosphoserine modification is found at Gly323.

This sequence belongs to the requiem/DPF family. In terms of assembly, component of the BAF complex, which includes at least actin (ACTB), ARID1A, ARID1B/BAF250, SMARCA2, SMARCA4/BRG1/BAF190A, ACTL6A/BAF53, ACTL6B/BAF53B, SMARCE1/BAF57, SMARCC1/BAF155, SMARCC2/BAF170, SMARCB1/SNF5/INI1, and one or more of SMARCD1/BAF60A, SMARCD2/BAF60B, or SMARCD3/BAF60C. In muscle cells, the BAF complex also contains DPF3. Interacts with acetylated histones H3 and H4. Component of neuron-specific chromatin remodeling complex (nBAF complex) composed of at least, ARID1A/BAF250A or ARID1B/BAF250B, SMARCD1/BAF60A, SMARCD3/BAF60C, SMARCA2/BRM/BAF190B, SMARCA4/BRG1/BAF190A, SMARCB1/BAF47, SMARCC1/BAF155, SMARCE1/BAF57, SMARCC2/BAF170, DPF1/BAF45B, DPF3/BAF45C, ACTL6B/BAF53B and actin. As to quaternary structure, interacts with HDGFL2. Interacts with SMARCA4/BRG1/BAF190A, SMARCC1/BAF155 and SMARCD1/BAF60A. Expressed in the heart and somites. Expressed in cerebellum and spinal cord, but not in cerebral cortex. Expressed specifically in post-mitotic neurons (at protein level).

The protein resides in the nucleus. In terms of biological role, muscle-specific component of the BAF complex, a multiprotein complex involved in transcriptional activation and repression of select genes by chromatin remodeling (alteration of DNA-nucleosome topology). Specifically binds acetylated lysines on histone 3 and 4 (H3K14ac, H3K9ac, H4K5ac, H4K8ac, H4K12ac, H4K16ac). In the complex, it acts as a tissue-specific anchor between histone acetylations and methylations and chromatin remodeling. It thereby probably plays an essential role in heart and skeletal muscle development. Belongs to the neuron-specific chromatin remodeling complex (nBAF complex). During neural development a switch from a stem/progenitor to a post-mitotic chromatin remodeling mechanism occurs as neurons exit the cell cycle and become committed to their adult state. The transition from proliferating neural stem/progenitor cells to post-mitotic neurons requires a switch in subunit composition of the npBAF and nBAF complexes. As neural progenitors exit mitosis and differentiate into neurons, npBAF complexes which contain ACTL6A/BAF53A and PHF10/BAF45A, are exchanged for homologous alternative ACTL6B/BAF53B and DPF1/BAF45B or DPF3/BAF45C subunits in neuron-specific complexes (nBAF). The npBAF complex is essential for the self-renewal/proliferative capacity of the multipotent neural stem cells. The nBAF complex along with CREST plays a role regulating the activity of genes essential for dendrite growth. Its function is as follows. Acts as a regulator of myogenesis in cooperation with HDGFL2. Mediates the interaction of HDGFL2 with the BAF complex. HDGFL2-DPF3a activate myogenic genes by increasing chromatin accessibility through recruitment of SMARCA4/BRG1/BAF190A (ATPase subunit of the BAF complex) to myogenic gene promoters. This chain is Zinc finger protein DPF3 (Dpf3), found in Mus musculus (Mouse).